We begin with the raw amino-acid sequence, 133 residues long: Small ribosomal subunit protein uS12 (133 aa).

D89 carries the 3-methylthioaspartic acid modification. The disordered stretch occupies residues 103–133 (DTAGVAGRTQRRSKYGAKRPKPGQAAPAKKK). Over residues 111-123 (TQRRSKYGAKRPK) the composition is skewed to basic residues. Over residues 124–133 (PGQAAPAKKK) the composition is skewed to low complexity.

Belongs to the universal ribosomal protein uS12 family. As to quaternary structure, part of the 30S ribosomal subunit. Contacts proteins S8 and S17. May interact with IF1 in the 30S initiation complex.

Functionally, with S4 and S5 plays an important role in translational accuracy. Its function is as follows. Interacts with and stabilizes bases of the 16S rRNA that are involved in tRNA selection in the A site and with the mRNA backbone. Located at the interface of the 30S and 50S subunits, it traverses the body of the 30S subunit contacting proteins on the other side and probably holding the rRNA structure together. The combined cluster of proteins S8, S12 and S17 appears to hold together the shoulder and platform of the 30S subunit. In Bacteroides thetaiotaomicron (strain ATCC 29148 / DSM 2079 / JCM 5827 / CCUG 10774 / NCTC 10582 / VPI-5482 / E50), this protein is Small ribosomal subunit protein uS12.